The following is a 172-amino-acid chain: Phosphopantetheine adenylyltransferase (172 aa).

Threonine 14 lines the substrate pocket. ATP contacts are provided by residues 14-15 (TF) and histidine 22. Positions 46, 78, and 92 each coordinate substrate. Residues 93–95 (GMR), glutamate 103, and 128–134 (WLYISST) contribute to the ATP site.

This sequence belongs to the bacterial CoaD family. As to quaternary structure, homohexamer. Requires Mg(2+) as cofactor.

The protein resides in the cytoplasm. It catalyses the reaction (R)-4'-phosphopantetheine + ATP + H(+) = 3'-dephospho-CoA + diphosphate. It functions in the pathway cofactor biosynthesis; coenzyme A biosynthesis; CoA from (R)-pantothenate: step 4/5. Reversibly transfers an adenylyl group from ATP to 4'-phosphopantetheine, yielding dephospho-CoA (dPCoA) and pyrophosphate. This is Phosphopantetheine adenylyltransferase from Solidesulfovibrio magneticus (strain ATCC 700980 / DSM 13731 / RS-1) (Desulfovibrio magneticus).